The primary structure comprises 104 residues: NADH-quinone oxidoreductase subunit K (104 aa).

The next 3 helical transmembrane spans lie at 4–24 (VAYYLVLSAILFSIGVGAFLI), 28–48 (IITIFMSIELMLNAVNLSFVA), and 64–84 (IFVFFVMVVAAAEAAVGLAII).

It belongs to the complex I subunit 4L family. As to quaternary structure, NDH-1 is composed of 14 different subunits. Subunits NuoA, H, J, K, L, M, N constitute the membrane sector of the complex.

It is found in the cell inner membrane. It catalyses the reaction a quinone + NADH + 5 H(+)(in) = a quinol + NAD(+) + 4 H(+)(out). Its function is as follows. NDH-1 shuttles electrons from NADH, via FMN and iron-sulfur (Fe-S) centers, to quinones in the respiratory chain. The immediate electron acceptor for the enzyme in this species is believed to be ubiquinone. Couples the redox reaction to proton translocation (for every two electrons transferred, four hydrogen ions are translocated across the cytoplasmic membrane), and thus conserves the redox energy in a proton gradient. In Acidobacterium capsulatum (strain ATCC 51196 / DSM 11244 / BCRC 80197 / JCM 7670 / NBRC 15755 / NCIMB 13165 / 161), this protein is NADH-quinone oxidoreductase subunit K.